The chain runs to 315 residues: Small ribosomal subunit protein uS3 (315 aa).

In terms of domain architecture, KH type-2 spans 38-106 (IRKMMSRGME…QVQLNILEVK (69 aa)). The interval 211–315 (AEREAQEALQ…VANTPEKAEE (105 aa)) is disordered. Over residues 222–232 (QTRRERPRRGP) the composition is skewed to basic residues. Residues 265 to 315 (APAETPAGEAAATEPTAPVAEPATAAASAPAEAASAPAEAAVANTPEKAEE) show a composition bias toward low complexity.

The protein belongs to the universal ribosomal protein uS3 family. As to quaternary structure, part of the 30S ribosomal subunit. Forms a tight complex with proteins S10 and S14.

Functionally, binds the lower part of the 30S subunit head. Binds mRNA in the 70S ribosome, positioning it for translation. This is Small ribosomal subunit protein uS3 from Frankia casuarinae (strain DSM 45818 / CECT 9043 / HFP020203 / CcI3).